The primary structure comprises 417 residues: Phosphoglycerate kinase 2 (417 aa).

Residues Val23, Asp24, Phe25, Asn26, Asn38, Arg39, Ser62, His63, Gly65, Arg66, Leu121, Arg122, His168, and Arg169 each coordinate (2R)-3-phosphoglycerate. Gly212 provides a ligand contact to ADP. Gly212 is a binding site for CDP. Residues Ala213 and Lys214 each contribute to the AMP site. Residue Ala213 coordinates ATP. Residue Ala213 coordinates Mg(2+). Asp217 serves as a coordination point for CDP. Asp217 lines the Mg(2+) pocket. Lys218 is an AMP binding site. An ATP-binding site is contributed by Lys218. ADP is bound at residue Gly236. Gly236 provides a ligand contact to CDP. Positions 237 and 312 each coordinate AMP. ATP contacts are provided by Gly237 and Gly312. Residues Gly337 and Phe342 each contribute to the CDP site. An ADP-binding site is contributed by Phe342. Glu343 serves as a coordination point for AMP. Positions 343, 374, and 375 each coordinate ATP. Asp374 contacts Mg(2+).

Belongs to the phosphoglycerate kinase family. In terms of assembly, monomer. Requires Mg(2+) as cofactor.

It localises to the cytoplasm. Its subcellular location is the mitochondrion. The enzyme catalyses (2R)-3-phosphoglycerate + ATP = (2R)-3-phospho-glyceroyl phosphate + ADP. It functions in the pathway carbohydrate degradation; glycolysis; pyruvate from D-glyceraldehyde 3-phosphate: step 2/5. Functionally, catalyzes one of the two ATP producing reactions in the glycolytic pathway via the reversible conversion of 1,3-diphosphoglycerate to 3-phosphoglycerate. Both L- and D- forms of purine and pyrimidine nucleotides can be used as substrates, but the activity is much lower on pyrimidines. Negatively regulates the biosynthesis of acetyl-CoA from pyruvate in the mitochondrion. This Rhizopus niveus protein is Phosphoglycerate kinase 2 (PGK2).